We begin with the raw amino-acid sequence, 310 residues long: Acetaldehyde dehydrogenase 1 (310 aa).

Position 12-15 (12-15 (SGNI)) interacts with NAD(+). Cys-127 (acyl-thioester intermediate) is an active-site residue. NAD(+)-binding positions include 163–171 (SAGPGTRAN) and Asn-282.

Belongs to the acetaldehyde dehydrogenase family.

The enzyme catalyses acetaldehyde + NAD(+) + CoA = acetyl-CoA + NADH + H(+). The polypeptide is Acetaldehyde dehydrogenase 1 (Mycobacterium sp. (strain KMS)).